The primary structure comprises 653 residues: Chaperone protein DnaK (653 aa).

The residue at position 200 (Thr-200) is a Phosphothreonine; by autocatalysis. A disordered region spans residues 615-653 (AEAAAAGAAGAGGAGASAGGASQQQDDVVDAEFKEVKKD). Residues 623–632 (AGAGGAGASA) show a composition bias toward gly residues.

It belongs to the heat shock protein 70 family.

In terms of biological role, acts as a chaperone. In Paraburkholderia xenovorans (strain LB400), this protein is Chaperone protein DnaK.